A 1076-amino-acid chain; its full sequence is Carbamoyl phosphate synthase large chain (1076 aa).

The interval 1-402 is carboxyphosphate synthetic domain; the sequence is MPKREDIRKI…ALQKAIRSLE (402 aa). 12 residues coordinate ATP: arginine 129, arginine 169, glycine 175, glycine 176, glutamate 208, valine 210, glutamate 215, glycine 241, valine 242, histidine 243, glutamine 285, and glutamate 299. The region spanning 133 to 328 is the ATP-grasp 1 domain; sequence KEAMRKIGLD…IAKIAAKLAV (196 aa). Positions 285, 299, and 301 each coordinate Mg(2+). Positions 285, 299, and 301 each coordinate Mn(2+). Residues 403–555 are oligomerization domain; that stretch reads IGRYGLGCDG…YSTYEDENEA (153 aa). A carbamoyl phosphate synthetic domain region spans residues 556 to 939; sequence LRSERKKVMI…YKAELAAGMK (384 aa). Residues 680-871 form the ATP-grasp 2 domain; it reads AELLERLNIP…LAKIAAKLMM (192 aa). Arginine 716, lysine 755, leucine 757, glutamate 762, glycine 787, valine 788, histidine 789, serine 790, glutamine 830, and glutamate 842 together coordinate ATP. Mg(2+)-binding residues include glutamine 830, glutamate 842, and asparagine 844. Residues glutamine 830, glutamate 842, and asparagine 844 each contribute to the Mn(2+) site. The MGS-like domain occupies 938–1076; sequence MKLPLKGTVF…KSIQEYHEES (139 aa). Residues 940–1076 form an allosteric domain region; sequence LPLKGTVFIS…KSIQEYHEES (137 aa).

Belongs to the CarB family. As to quaternary structure, composed of two chains; the small (or glutamine) chain promotes the hydrolysis of glutamine to ammonia, which is used by the large (or ammonia) chain to synthesize carbamoyl phosphate. Tetramer of heterodimers (alpha,beta)4. Mg(2+) is required as a cofactor. Requires Mn(2+) as cofactor.

The enzyme catalyses hydrogencarbonate + L-glutamine + 2 ATP + H2O = carbamoyl phosphate + L-glutamate + 2 ADP + phosphate + 2 H(+). The catalysed reaction is hydrogencarbonate + NH4(+) + 2 ATP = carbamoyl phosphate + 2 ADP + phosphate + 2 H(+). It functions in the pathway amino-acid biosynthesis; L-arginine biosynthesis; carbamoyl phosphate from bicarbonate: step 1/1. It participates in pyrimidine metabolism; UMP biosynthesis via de novo pathway; (S)-dihydroorotate from bicarbonate: step 1/3. Large subunit of the glutamine-dependent carbamoyl phosphate synthetase (CPSase). CPSase catalyzes the formation of carbamoyl phosphate from the ammonia moiety of glutamine, carbonate, and phosphate donated by ATP, constituting the first step of 2 biosynthetic pathways, one leading to arginine and/or urea and the other to pyrimidine nucleotides. The large subunit (synthetase) binds the substrates ammonia (free or transferred from glutamine from the small subunit), hydrogencarbonate and ATP and carries out an ATP-coupled ligase reaction, activating hydrogencarbonate by forming carboxy phosphate which reacts with ammonia to form carbamoyl phosphate. This chain is Carbamoyl phosphate synthase large chain, found in Archaeoglobus fulgidus (strain ATCC 49558 / DSM 4304 / JCM 9628 / NBRC 100126 / VC-16).